Consider the following 421-residue polypeptide: UDP-N-acetylglucosamine 1-carboxyvinyltransferase (421 aa).

Position 22–23 (22–23) interacts with phosphoenolpyruvate; the sequence is KN. Arg-93 contacts UDP-N-acetyl-alpha-D-glucosamine. Catalysis depends on Cys-117, which acts as the Proton donor. Cys-117 carries the 2-(S-cysteinyl)pyruvic acid O-phosphothioketal modification. UDP-N-acetyl-alpha-D-glucosamine contacts are provided by residues 122–126, Asp-308, and Ile-330; that span reads RPVDL.

The protein belongs to the EPSP synthase family. MurA subfamily.

The protein localises to the cytoplasm. It carries out the reaction phosphoenolpyruvate + UDP-N-acetyl-alpha-D-glucosamine = UDP-N-acetyl-3-O-(1-carboxyvinyl)-alpha-D-glucosamine + phosphate. It participates in cell wall biogenesis; peptidoglycan biosynthesis. In terms of biological role, cell wall formation. Adds enolpyruvyl to UDP-N-acetylglucosamine. This chain is UDP-N-acetylglucosamine 1-carboxyvinyltransferase, found in Pseudomonas entomophila (strain L48).